The primary structure comprises 75 residues: UPF0270 protein PSEEN1465 (75 aa).

This sequence belongs to the UPF0270 family.

In Pseudomonas entomophila (strain L48), this protein is UPF0270 protein PSEEN1465.